The chain runs to 439 residues: Serine hydroxymethyltransferase (439 aa).

Residues 1-20 (MNAPHRDETTASHRDDGFFT) form a disordered region. (6S)-5,6,7,8-tetrahydrofolate is bound by residues Leu136 and 140–142 (GHL). Position 245 is an N6-(pyridoxal phosphate)lysine (Lys245).

The protein belongs to the SHMT family. As to quaternary structure, homodimer. It depends on pyridoxal 5'-phosphate as a cofactor.

The protein resides in the cytoplasm. It carries out the reaction (6R)-5,10-methylene-5,6,7,8-tetrahydrofolate + glycine + H2O = (6S)-5,6,7,8-tetrahydrofolate + L-serine. Its pathway is one-carbon metabolism; tetrahydrofolate interconversion. It participates in amino-acid biosynthesis; glycine biosynthesis; glycine from L-serine: step 1/1. Functionally, catalyzes the reversible interconversion of serine and glycine with tetrahydrofolate (THF) serving as the one-carbon carrier. This reaction serves as the major source of one-carbon groups required for the biosynthesis of purines, thymidylate, methionine, and other important biomolecules. Also exhibits THF-independent aldolase activity toward beta-hydroxyamino acids, producing glycine and aldehydes, via a retro-aldol mechanism. This Jannaschia sp. (strain CCS1) protein is Serine hydroxymethyltransferase.